The following is a 288-amino-acid chain: Nucleotide-binding protein PM0169 (288 aa).

8 to 15 (GHSGAGKS) is a binding site for ATP. Residue 56–59 (DIRN) participates in GTP binding.

The protein belongs to the RapZ-like family.

Its function is as follows. Displays ATPase and GTPase activities. The polypeptide is Nucleotide-binding protein PM0169 (Pasteurella multocida (strain Pm70)).